Reading from the N-terminus, the 130-residue chain is Flagellar assembly factor FliW (130 aa).

This sequence belongs to the FliW family. In terms of assembly, interacts with translational regulator CsrA and flagellin(s).

It is found in the cytoplasm. Its function is as follows. Acts as an anti-CsrA protein, binds CsrA and prevents it from repressing translation of its target genes, one of which is flagellin. Binds to flagellin and participates in the assembly of the flagellum. The chain is Flagellar assembly factor FliW from Borrelia turicatae (strain 91E135).